We begin with the raw amino-acid sequence, 448 residues long: MIDSTAVAAGHAKQPFYKHLYFQVLVAIIAGIALGHFYPTFGEQLKPLGDGFIRLVKMIIAPVIFLTVATGIAGMNDMKKVGRVAGKAMIYFLVFSTLALIVGLIVANTVQPGAGMNIDPATLDAKAVATYADKAHEQTITGFLMNIIPTTIVGAFASGDILQVLFFSVLFGIALGIVGEKGKPVTDFMHAMMYPIFKLVAILMKAAPIGAFGAMAFTIGKYGISSVTNLAMLIGTFYITSALFVFVVLGAVCRYNGFSIVALIRYIKEELLLVLGTSSSEAALPGLMSKMEKAGCKRSVVGLVIPTGYSFNLDGTNIYMTLAALFIAQATGIHLSFGEQILLLLVAMLSSKGAAGITGAGFITLAATLSVVPSVPVAGMALILGIDRFMSECRALTNFVGNAVATIVVARWEGELDQEQLARVLSGKEEFTSIADVDALPASVQPAE.

A run of 8 helical transmembrane segments spans residues 20–38 (LYFQVLVAIIAGIALGHFY), 53–75 (IRLVKMIIAPVIFLTVATGIAGM), 88–110 (AMIYFLVFSTLALIVGLIVANTV), 161–178 (ILQVLFFSVLFGIALGIV), 199–220 (LVAILMKAAPIGAFGAMAFTIG), 230–252 (LAMLIGTFYITSALFVFVVLGAV), 325–347 (LFIAQATGIHLSFGEQILLLLVA), and 362–384 (FITLAATLSVVPSVPVAGMALIL).

It belongs to the dicarboxylate/amino acid:cation symporter (DAACS) (TC 2.A.23) family.

The protein localises to the cell inner membrane. In terms of biological role, responsible for the transport of dicarboxylates such as succinate, fumarate, and malate from the periplasm across the membrane. In Agrobacterium fabrum (strain C58 / ATCC 33970) (Agrobacterium tumefaciens (strain C58)), this protein is C4-dicarboxylate transport protein.